Here is a 680-residue protein sequence, read N- to C-terminus: ABC transporter B family member 24, mitochondrial (680 aa).

The N-terminal 75 residues, 1-75, are a transit peptide targeting the mitochondrion; it reads MMRVSQLQLC…MFFSTSTSAP (75 aa). Residues 108–402 form the ABC transmembrane type-1 domain; it reads VISAFACLVG…LGVVYSDTVQ (295 aa). Transmembrane regions (helical) follow at residues 109-129, 145-165, 232-252, 255-275, 340-360, and 376-396; these read ISAFACLVGAKFLNVQVPFLF, NPYLVAAFATPSSVLIGYGIA, AMVFNIMPTILEISMVSCILA, FGAVYALITCLSVGSYIAFTL, FALLNFGQSFIFSTALSTAMV, and LVMVNGLLFQLSLPLYFLGVV. The 235-residue stretch at 439–673 folds into the ABC transporter domain; sequence ISFENVHFSY…SGRYAKLWTQ (235 aa). Residues tyrosine 448 and 472-483 each bind ATP; that span reads GSSGSGKSTILR.

It belongs to the ABC transporter superfamily. ABCB family. Heavy Metal importer (TC 3.A.1.210) subfamily. Homodimer. As to expression, mostly expressed at low levels in roots and flowers.

It is found in the mitochondrion inner membrane. Functionally, performs an essential function in the generation of cytoplasmic iron-sulfur proteins by mediating export of Fe/S cluster precursors synthesized by NFS1 and other mitochondrial proteins. Not involved in the export of cyclic pyranopterin monophosphate (cPMP) from mitochondria to the cytosol. In Arabidopsis thaliana (Mouse-ear cress), this protein is ABC transporter B family member 24, mitochondrial (ABCB24).